Reading from the N-terminus, the 151-residue chain is Chaperonin GroEL (151 aa).

41–45 contributes to the ATP binding site; that stretch reads DGTTT.

It belongs to the chaperonin (HSP60) family. In terms of assembly, forms a cylinder of 14 subunits composed of two heptameric rings stacked back-to-back. Interacts with the co-chaperonin GroES.

It is found in the cytoplasm. It catalyses the reaction ATP + H2O + a folded polypeptide = ADP + phosphate + an unfolded polypeptide.. Functionally, together with its co-chaperonin GroES, plays an essential role in assisting protein folding. The GroEL-GroES system forms a nano-cage that allows encapsulation of the non-native substrate proteins and provides a physical environment optimized to promote and accelerate protein folding. This is Chaperonin GroEL from Mycolicibacterium fortuitum (Mycobacterium fortuitum).